A 371-amino-acid polypeptide reads, in one-letter code: MKKSLFCGVCLCALVAMGGTSFADIMVGVGAPLTGSQAAFGEQIKRGVEAAVAEANAKGGMNGEQITLVYGDDAADPKQGISVANKFVGDGVKFVIGHFNSGVSIPTSDIYAENGVLMIAPGTTNPTFTERELWNTFRTCRRDDKQGIVPGKYMADNYKDGKVAILHDKTPYGQGLADETKKKLNELGTKETLYEGVNVGEKDFSALIAKLKQAGVNVVYWGGLHPEAGLIIRQMADQGLKAQFISGDGIVSNELASIAGPAVEGTLNTFGPDPRNNPDNAELVKKFRDAGFEPEAYTFYAYAGVQSLVNAANAAGSNDPMEVATAMKEKGPFKTVLGDISFDAKGDPSLSPYVMFEWRKGEDGKYNYFQK.

Residues 1-23 (MKKSLFCGVCLCALVAMGGTSFA) form the signal peptide.

The protein belongs to the leucine-binding protein family.

In terms of biological role, component of an amino-acid transport system. The polypeptide is Leu/Ile/Val-binding protein homolog 2 (Brucella abortus (strain 2308)).